The primary structure comprises 610 residues: Protein arginine N-methyltransferase 5 (610 aa).

The 304-residue stretch at 284–587 (LEIPLQPLCD…VDATKVWYEW (304 aa)) folds into the SAM-dependent MTase PRMT-type domain. Residue tyrosine 300 coordinates S-adenosyl-L-methionine. Phenylalanine 303 serves as a coordination point for a protein. S-adenosyl-L-methionine is bound by residues 309 to 310 (KY), glutamate 368, and 396 to 397 (DM). Glutamate 412 and glutamate 421 together coordinate a protein. Catalysis depends on proton donor/acceptor residues glutamate 412 and glutamate 421. The segment at 470–610 (AFDYGYVSLL…TRGTGYNMRL (141 aa)) is interaction with vls.

Belongs to the class I-like SAM-binding methyltransferase superfamily. Protein arginine N-methyltransferase family. Interacts with vls. As to expression, expressed only in ovaries.

Its subcellular location is the cytoplasm. In terms of biological role, arginine methyltransferase that can both catalyze the formation of omega-N monomethylarginine (MMA) and symmetrical dimethylarginine (sDMA). Specifically mediates the symmetrical dimethylation of arginine residues in the small nuclear ribonucleoproteins SmD1 and SmD3. Required for arginine symmetrical dimethylation of piwi family proteins, piwi, aub and AGO3, during germline development. Required during oogenesis for pole cell formation in the pathway controlled by oskar (osk) and for abdominal segments during early embryogenesis. Involved in nanos (nos) and germ cell mRNAs localization. The protein is Protein arginine N-methyltransferase 5 of Drosophila melanogaster (Fruit fly).